Here is a 2194-residue protein sequence, read N- to C-terminus: Supervillin (2194 aa).

Residues 1–174 are interaction with MYLK; the sequence is MKRKERIARR…SSYSRTELSG (174 aa). Disordered stretches follow at residues 35–98, 118–335, 388–414, 450–500, 513–563, 589–667, 685–719, and 739–791; these read LEED…TQSL, EKYG…QRRH, PESI…KVLE, EDRG…TERM, AVSQ…QTSK, RASR…KVDE, KSFD…QPVT, and HPVM…DSST. Phosphoserine is present on Ser-50. Polar residues predominate over residues 87 to 98; it reads PYSSGIMDTQSL. 2 stretches are compositionally biased toward basic and acidic residues: residues 139–161 and 181–192; these read SRKD…ESSR and ESKDYGLHRSDG. Residues Ser-245 and Ser-262 each carry the phosphoserine modification. Composition is skewed to basic and acidic residues over residues 283–294 and 308–319; these read PKHEWFLQKDSE and KVREKLVREESA. Residues 320 to 330 show a composition bias toward polar residues; sequence RSSPELTSESL. A phosphoserine mark is found at Ser-321 and Ser-322. A compositionally biased stretch (polar residues) spans 455-467; sequence GRSQEAPSGTEDL. Over residues 540–551 the composition is skewed to low complexity; that stretch reads PPQLQALKAKAP. 2 stretches are compositionally biased toward basic and acidic residues: residues 592–615 and 626–635; these read RKPE…ERGS and ENRKTSERFR. Phosphoserine occurs at positions 652 and 686. Residues 704–714 are compositionally biased toward basic and acidic residues; that stretch reads QRLRRLQDRSH. Ser-747 and Ser-781 each carry phosphoserine. A compositionally biased stretch (basic and acidic residues) spans 770–782; that stretch reads LARDQTNESKDSA. Tyr-829 is subject to Phosphotyrosine. Thr-831 carries the phosphothreonine modification. A phosphoserine mark is found at Ser-893, Ser-899, Ser-903, Ser-947, Ser-979, and Ser-1031. Residues 1036–1077 form a disordered region; sequence EFGEPTSEQTGAAAGKPAAPTATPVSWKPQDPSEQPQEKRYQ. Residues 1045-1059 are compositionally biased toward low complexity; that stretch reads TGAAAGKPAAPTATP. Ser-1099 and Ser-1205 each carry phosphoserine. Residue Thr-1210 is modified to Phosphothreonine. 3 positions are modified to phosphoserine: Ser-1214, Ser-1302, and Ser-1385. The interaction with NEB stretch occupies residues 1399 to 1667; it reads SNVSLRSVNL…KFLDWTELKR (269 aa). 5 Gelsolin-like repeats span residues 1421–1520, 1540–1662, 1732–1842, 1861–1962, and 1995–2102; these read KKLM…LGGQ, IETN…FLDW, ISVD…FQGG, WRLY…LGRR, and ATEF…FPSW. An HP domain is found at 2131–2194; it reads KLCKTIYPLA…VNLKKAKGLF (64 aa).

This sequence belongs to the villin/gelsolin family. In terms of assembly, associates with F-actin. Interacts with NEB. Interacts with MYH9. Interacts with MYLK. Interacts with TASOR. As to quaternary structure, interacts with TRIP6 and DYNLT1. Interacts with KIF14; at midbody during cytokinesis.

The protein localises to the cell membrane. It is found in the cytoplasm. Its subcellular location is the cytoskeleton. It localises to the cell projection. The protein resides in the invadopodium. The protein localises to the podosome. It is found in the midbody. Its subcellular location is the cleavage furrow. Functionally, forms a high-affinity link between the actin cytoskeleton and the membrane. Is among the first costameric proteins to assemble during myogenesis and it contributes to myogenic membrane structure and differentiation. Appears to be involved in myosin II assembly. May modulate myosin II regulation through MLCK during cell spreading, an initial step in cell migration. May play a role in invadopodial function. Its function is as follows. May be involved in modulation of focal adhesions. Supervillin-mediated down-regulation of focal adhesions involves binding to TRIP6. Plays a role in cytokinesis through KIF14 interaction. The polypeptide is Supervillin (Bos taurus (Bovine)).